A 518-amino-acid chain; its full sequence is NADH-quinone oxidoreductase subunit N (518 aa).

The next 14 helical transmembrane spans lie at 18 to 38 (FRPE…DLVF), 45 to 65 (VALL…LLAI), 82 to 102 (AFAI…VIIA), 113 to 133 (IGQF…MASA), 136 to 156 (LLMV…LAGF), 171 to 191 (VIYG…LYGL), 220 to 240 (VALV…VAAV), 254 to 274 (PTPF…ALAI), 295 to 315 (LAGI…MTLG), 328 to 348 (LLAY…SAVS), 355 to 375 (VMIY…VVIL), 399 to 419 (AVAF…AGFV), 439 to 459 (WYAW…YYYV), and 486 to 506 (VMLG…TPMV).

Belongs to the complex I subunit 2 family. In terms of assembly, NDH-1 is composed of 14 different subunits. Subunits NuoA, H, J, K, L, M, N constitute the membrane sector of the complex.

The protein localises to the cell inner membrane. The catalysed reaction is a quinone + NADH + 5 H(+)(in) = a quinol + NAD(+) + 4 H(+)(out). Its function is as follows. NDH-1 shuttles electrons from NADH, via FMN and iron-sulfur (Fe-S) centers, to quinones in the respiratory chain. The immediate electron acceptor for the enzyme in this species is believed to be ubiquinone. Couples the redox reaction to proton translocation (for every two electrons transferred, four hydrogen ions are translocated across the cytoplasmic membrane), and thus conserves the redox energy in a proton gradient. The protein is NADH-quinone oxidoreductase subunit N of Anaeromyxobacter sp. (strain Fw109-5).